Reading from the N-terminus, the 706-residue chain is Translation initiation factor IF-2 (706 aa).

A compositionally biased stretch (basic and acidic residues) spans 55-81 (AKETANEKPAEQKKQSSNKINDRKKND). Residues 55 to 127 (AKETANEKPA…KPKKELPEKI (73 aa)) form a disordered region. Positions 82–98 (VQNNQFNKNKKNNNQNK) are enriched in low complexity. A tr-type G domain is found at 207-376 (VRPPVVTIMG…LLVSEVGELK (170 aa)). A G1 region spans residues 216–223 (GHVDHGKT). 216–223 (GHVDHGKT) is a binding site for GTP. The segment at 241–245 (GITQH) is G2. Positions 262 to 265 (DTPG) are G3. Residues 262-266 (DTPGH) and 316-319 (NKID) contribute to the GTP site. The interval 316-319 (NKID) is G4. Positions 352–354 (SAK) are G5.

This sequence belongs to the TRAFAC class translation factor GTPase superfamily. Classic translation factor GTPase family. IF-2 subfamily.

Its subcellular location is the cytoplasm. In terms of biological role, one of the essential components for the initiation of protein synthesis. Protects formylmethionyl-tRNA from spontaneous hydrolysis and promotes its binding to the 30S ribosomal subunits. Also involved in the hydrolysis of GTP during the formation of the 70S ribosomal complex. The protein is Translation initiation factor IF-2 of Bacillus pumilus (strain SAFR-032).